The following is a 727-amino-acid chain: Non-structural protein 4 (727 aa).

Disordered stretches follow at residues 1-38 and 671-727; these read MNQSRSFVTGRGRDLSRTPSALSSNSETPGSMSSPSEG and GNSM…KLSK. Polar residues predominate over residues 17-38; sequence RTPSALSSNSETPGSMSSPSEG. The segment covering 712-727 has biased composition (basic residues); sequence SRRKARKARAASKLSK.

The protein is Non-structural protein 4 of Rice dwarf virus (isolate Fujian) (RDV).